Here is a 247-residue protein sequence, read N- to C-terminus: MVDREQLVQKARLAEQAERYDDMAAAMKAVTELNEPLSNEERNLLSVAYKNVVGARRSSWRVISSIEQKTSADGNEKKIEMVRAYREKIEKELETVCQDVLSLLDNFLIKNCSETQYESKVFYLKMKGDYYRYLAEVATGEKRATVVESSEKAYSEAHEISKEHMQPTHPIRLGLALNYSVFYYEIQNAPEQACHLAKTAFDDAIAELDTLNEDSYKDSTLIMQLLRDNLTLWTSDQQDDDGGEGNN.

This sequence belongs to the 14-3-3 family. In terms of assembly, homodimer, and heterodimer with other family members.

It localises to the cytoplasm. Adapter protein implicated in the regulation of a large spectrum of both general and specialized signaling pathways. Binds to a large number of partners, usually by recognition of a phosphoserine or phosphothreonine motif. Binding generally results in the modulation of the activity of the binding partner. This chain is 14-3-3 protein gamma-A (ywhag-a), found in Xenopus laevis (African clawed frog).